The primary structure comprises 232 residues: 7-cyano-7-deazaguanine synthase (232 aa).

Position 8 to 18 (8 to 18) interacts with ATP; sequence FSGGQDSTTCL. Zn(2+)-binding residues include Cys-189, Cys-198, Cys-201, and Cys-204.

It belongs to the QueC family. It depends on Zn(2+) as a cofactor.

The catalysed reaction is 7-carboxy-7-deazaguanine + NH4(+) + ATP = 7-cyano-7-deazaguanine + ADP + phosphate + H2O + H(+). Its pathway is purine metabolism; 7-cyano-7-deazaguanine biosynthesis. Functionally, catalyzes the ATP-dependent conversion of 7-carboxy-7-deazaguanine (CDG) to 7-cyano-7-deazaguanine (preQ(0)). In Proteus mirabilis (strain HI4320), this protein is 7-cyano-7-deazaguanine synthase.